Reading from the N-terminus, the 317-residue chain is tRNA dimethylallyltransferase (317 aa).

21–28 (GPTASGKS) serves as a coordination point for ATP. A substrate-binding site is contributed by 23–28 (TASGKS). The tract at residues 46 to 49 (DSMQ) is interaction with substrate tRNA.

The protein belongs to the IPP transferase family. Monomer. It depends on Mg(2+) as a cofactor.

It carries out the reaction adenosine(37) in tRNA + dimethylallyl diphosphate = N(6)-dimethylallyladenosine(37) in tRNA + diphosphate. Its function is as follows. Catalyzes the transfer of a dimethylallyl group onto the adenine at position 37 in tRNAs that read codons beginning with uridine, leading to the formation of N6-(dimethylallyl)adenosine (i(6)A). The sequence is that of tRNA dimethylallyltransferase from Nitrobacter hamburgensis (strain DSM 10229 / NCIMB 13809 / X14).